We begin with the raw amino-acid sequence, 119 residues long: UPF0102 protein Pmen_0910 (119 aa).

The protein belongs to the UPF0102 family.

In Ectopseudomonas mendocina (strain ymp) (Pseudomonas mendocina), this protein is UPF0102 protein Pmen_0910.